Here is a 149-residue protein sequence, read N- to C-terminus: Oligosaccharyltransferase complex subunit OSTC (149 aa).

Topologically, residues 1–32 (MESLYRVPFLVLECPNLKLKKPPWVHMPSAMT) are cytoplasmic. The helical transmembrane segment at 33 to 53 (VYALVVVSYFLITGGIIYDVI) threads the bilayer. Topologically, residues 54-83 (VEPPSVGSVTDEHGHQRPVAFLAYRVNGQY) are extracellular. A helical transmembrane segment spans residues 84-104 (IMEGLASSFLFTMGGLGFIIL). At 105 to 117 (DRSNAPNIPKLNR) the chain is on the cytoplasmic side. A helical transmembrane segment spans residues 118–138 (FLLLFIGFVCVLLSFFMARVF). At 139-149 (MRMKLPGYLMG) the chain is on the extracellular side.

It belongs to the OSTC family. As to quaternary structure, component of STT3A-containing oligosaccharyl transferase (OST-A) complex. STT3A-containing complex assembly occurs through the formation of 3 subcomplexes. Subcomplex 1 contains RPN1 and TMEM258, subcomplex 2 contains the STT3A-specific subunits STT3A, DC2/OSTC, and KCP2 as well as the core subunit OST4, and subcomplex 3 contains RPN2, DAD1, and OST48. The OST-A complex can form stable complexes with the Sec61 complex or with both the Sec61 and TRAP complexes. Interacts with PSEN1 and NCSTN; indicative for an association with the gamma-secretase complex.

The protein localises to the endoplasmic reticulum. The protein resides in the membrane. It participates in protein modification; protein glycosylation. Subunit of STT3A-containing oligosaccharyl transferase (OST-A) complex that catalyzes the initial transfer of a defined glycan (Glc(3)Man(9)GlcNAc(2) in eukaryotes) from the lipid carrier dolichol-pyrophosphate to an asparagine residue within an Asn-X-Ser/Thr consensus motif in nascent polypeptide chains, the first step in protein N-glycosylation. N-glycosylation occurs cotranslationally and the complex associates with the Sec61 complex at the channel-forming translocon complex that mediates protein translocation across the endoplasmic reticulum (ER). Within the OST-A complex, acts as an adapter that anchors the OST-A complex to the Sec61 complex. May be involved in N-glycosylation of APP (amyloid-beta precursor protein). Can modulate gamma-secretase cleavage of APP by enhancing endoprotelysis of PSEN1. The protein is Oligosaccharyltransferase complex subunit OSTC of Bos taurus (Bovine).